We begin with the raw amino-acid sequence, 284 residues long: Short-chain dehydrogenase RED1 (284 aa).

Residues Ile-11, Thr-37, Asp-58, Asn-86, Tyr-151, Lys-155, Val-184, and Thr-186 each coordinate NADP(+). Tyr-151 serves as the catalytic Proton acceptor. Lys-155 (lowers pKa of active site Tyr) is an active-site residue.

Belongs to the short-chain dehydrogenases/reductases (SDR) family.

The protein operates within polyketide biosynthesis. Its function is as follows. Short-chain dehydrogenase; part of the gene cluster that mediates the biosynthesis of pyriculol and pyriculariol, two heptaketides that induce lesion formation upon application on rice leaves but are dispensable for pathogenicity. The highly reducing polyketide synthase synthesizes the heptaketide backbone of pyriculol and pyriculariol. Pyriculol and pyriculariol contain several hydroxyl moieties and double bonds, so it can be assumed that several reduction steps occur during biosynthesis. These reactions could be executed by PKS19 itself or partly by the tailoring enzymes OXR1, OXR2, RED1, RED2 or RED3, identified within the cluster. The FAD-linked oxidoreductase OXR1 is the only tailoring enzyme for which the function has been determined yet, and is involved in the oxidation of dihydropyriculol and dihydropyriculariol into pyriculol and pyriculariol, respectively. In Pyricularia oryzae (strain 70-15 / ATCC MYA-4617 / FGSC 8958) (Rice blast fungus), this protein is Short-chain dehydrogenase RED1.